The sequence spans 418 residues: Cobalt-zinc-cadmium resistance protein CzcC (418 aa).

An N-terminal signal peptide occupies residues 1–22 (MRRLFLPLGLAVAFLSPNFAVA).

Belongs to the outer membrane factor (OMF) (TC 1.B.17) family.

The protein resides in the cell outer membrane. CzcC protein appears to modify the specificity of the system, perhaps by acting on the CzcB protein. When the CzcC protein is added to CzcA and CzcB, the efflux system gains specificity for cadmium and cobalt. This Cupriavidus metallidurans (strain ATCC 43123 / DSM 2839 / NBRC 102507 / CH34) (Ralstonia metallidurans) protein is Cobalt-zinc-cadmium resistance protein CzcC (czcC).